The chain runs to 97 residues: UPF0416 protein RC0826 (97 aa).

Residues 1–33 (MRIFVKAAISTAAWRFYAHPTVAMGICVGTALA) form the signal peptide.

The protein belongs to the UPF0416 family.

In Rickettsia conorii (strain ATCC VR-613 / Malish 7), this protein is UPF0416 protein RC0826.